The chain runs to 280 residues: Cell envelope integrity protein EipB (280 aa).

The first 24 residues, 1–24, serve as a signal peptide directing secretion; sequence MRFVRIAAAASGATVFMWAGFAGA. An intrachain disulfide couples cysteine 69 to cysteine 278.

Monomer.

Its subcellular location is the periplasm. Its function is as follows. Functions in the periplasm to maintain cell envelope integrity. This is Cell envelope integrity protein EipB from Brucella abortus (strain 2308).